The chain runs to 275 residues: Large ribosomal subunit protein uL2 (275 aa).

A disordered region spans residues 212–275; it reads NRHRGIRPQT…DKLIISRRKK (64 aa). A compositionally biased stretch (basic residues) spans 257–275; it reads YKTRRKKPSDKLIISRRKK.

The protein belongs to the universal ribosomal protein uL2 family. In terms of assembly, part of the 50S ribosomal subunit. Forms a bridge to the 30S subunit in the 70S ribosome.

Its function is as follows. One of the primary rRNA binding proteins. Required for association of the 30S and 50S subunits to form the 70S ribosome, for tRNA binding and peptide bond formation. It has been suggested to have peptidyltransferase activity; this is somewhat controversial. Makes several contacts with the 16S rRNA in the 70S ribosome. This chain is Large ribosomal subunit protein uL2, found in Nitratiruptor sp. (strain SB155-2).